Consider the following 515-residue polypeptide: 2-isopropylmalate synthase (515 aa).

Residues valine 5–histidine 267 form the Pyruvate carboxyltransferase domain. Aspartate 14, histidine 202, histidine 204, and asparagine 238 together coordinate Mn(2+). Residues valine 392–histidine 515 form a regulatory domain region.

Belongs to the alpha-IPM synthase/homocitrate synthase family. LeuA type 1 subfamily. In terms of assembly, homodimer. Requires Mn(2+) as cofactor.

Its subcellular location is the cytoplasm. The enzyme catalyses 3-methyl-2-oxobutanoate + acetyl-CoA + H2O = (2S)-2-isopropylmalate + CoA + H(+). It participates in amino-acid biosynthesis; L-leucine biosynthesis; L-leucine from 3-methyl-2-oxobutanoate: step 1/4. In terms of biological role, catalyzes the condensation of the acetyl group of acetyl-CoA with 3-methyl-2-oxobutanoate (2-ketoisovalerate) to form 3-carboxy-3-hydroxy-4-methylpentanoate (2-isopropylmalate). The sequence is that of 2-isopropylmalate synthase from Haemophilus influenzae (strain 86-028NP).